The sequence spans 492 residues: Phenylalanine--tRNA ligase alpha subunit (492 aa).

Residues Thr-335, 374-376 (QLE), and Tyr-414 contribute to the L-phenylalanine site. Glu-416 serves as a coordination point for Mg(2+). Phe-439 contributes to the L-phenylalanine binding site.

This sequence belongs to the class-II aminoacyl-tRNA synthetase family. Phe-tRNA synthetase alpha subunit type 2 subfamily. As to quaternary structure, tetramer of two alpha and two beta subunits. Requires Mg(2+) as cofactor.

Its subcellular location is the cytoplasm. The catalysed reaction is tRNA(Phe) + L-phenylalanine + ATP = L-phenylalanyl-tRNA(Phe) + AMP + diphosphate + H(+). This chain is Phenylalanine--tRNA ligase alpha subunit, found in Methanosarcina acetivorans (strain ATCC 35395 / DSM 2834 / JCM 12185 / C2A).